The sequence spans 360 residues: MLYWLTNLSDGGDFFNLFRYITFRAGGAFFTALLFGFFFGRPLIDLLRRKQKKGQPIRDDGPENHFSKAGTPTMGGLLILAALTIGTLLWARLDNGYVWIVLLVTLGFAAIGFADDYAKVTKQHHAGLSGKVRLLIGLCIAAAAGAAAAWLHPAALSGELALPFFKDALINLGLLYVPFTVLVILGAANAVNLTDGLDGLAIMPVMIAAASFSVIAYMVGNANFANYLGVHFVPGTGELAVFVAALIGGGLGFLWYNAPPAAVFMGDTGSLALGGALGAIAVVTKHEIVLAIVGGLFVVEALSVIIQVLYFKRTGKRVFLMAPIHHHFEKKGWGEAQIVIRFWIIALILALIGLATLKLR.

10 helical membrane-spanning segments follow: residues 20–40 (YITFRAGGAFFTALLFGFFFG), 71–91 (TPTMGGLLILAALTIGTLLWA), 93–113 (LDNGYVWIVLLVTLGFAAIGF), 134–154 (LLIGLCIAAAAGAAAAWLHPA), 168–188 (ALINLGLLYVPFTVLVILGAA), 199–219 (GLAIMPVMIAAASFSVIAYMV), 239–259 (LAVFVAALIGGGLGFLWYNAP), 263–283 (VFMGDTGSLALGGALGAIAVV), 288–308 (IVLAIVGGLFVVEALSVIIQV), and 337–357 (QIVIRFWIIALILALIGLATL).

This sequence belongs to the glycosyltransferase 4 family. MraY subfamily. Mg(2+) serves as cofactor.

The protein localises to the cell inner membrane. It carries out the reaction UDP-N-acetyl-alpha-D-muramoyl-L-alanyl-gamma-D-glutamyl-meso-2,6-diaminopimeloyl-D-alanyl-D-alanine + di-trans,octa-cis-undecaprenyl phosphate = di-trans,octa-cis-undecaprenyl diphospho-N-acetyl-alpha-D-muramoyl-L-alanyl-D-glutamyl-meso-2,6-diaminopimeloyl-D-alanyl-D-alanine + UMP. It functions in the pathway cell wall biogenesis; peptidoglycan biosynthesis. Functionally, catalyzes the initial step of the lipid cycle reactions in the biosynthesis of the cell wall peptidoglycan: transfers peptidoglycan precursor phospho-MurNAc-pentapeptide from UDP-MurNAc-pentapeptide onto the lipid carrier undecaprenyl phosphate, yielding undecaprenyl-pyrophosphoryl-MurNAc-pentapeptide, known as lipid I. The protein is Phospho-N-acetylmuramoyl-pentapeptide-transferase of Paracoccus denitrificans (strain Pd 1222).